Here is a 451-residue protein sequence, read N- to C-terminus: Bifunctional protein GlmU (451 aa).

The pyrophosphorylase stretch occupies residues 1-229 (MQRHAIILAA…FDEIIGVNDR (229 aa)). UDP-N-acetyl-alpha-D-glucosamine-binding positions include 8 to 11 (LAAG), K22, Q72, and 77 to 78 (GT). D102 contacts Mg(2+). UDP-N-acetyl-alpha-D-glucosamine is bound by residues G139, E154, and N227. Residue N227 coordinates Mg(2+). The segment at 230 to 250 (LMLSEAEKALQQRINRYHMEN) is linker. The interval 251–451 (GVTIIDPSST…QVNKEGYLKK (201 aa)) is N-acetyltransferase. 2 residues coordinate UDP-N-acetyl-alpha-D-glucosamine: R332 and K350. The active-site Proton acceptor is the H362. UDP-N-acetyl-alpha-D-glucosamine contacts are provided by Y365 and N376. Residues 385–386 (NY), A422, and R439 each bind acetyl-CoA.

This sequence in the N-terminal section; belongs to the N-acetylglucosamine-1-phosphate uridyltransferase family. The protein in the C-terminal section; belongs to the transferase hexapeptide repeat family. In terms of assembly, homotrimer. Requires Mg(2+) as cofactor.

It localises to the cytoplasm. It carries out the reaction alpha-D-glucosamine 1-phosphate + acetyl-CoA = N-acetyl-alpha-D-glucosamine 1-phosphate + CoA + H(+). The enzyme catalyses N-acetyl-alpha-D-glucosamine 1-phosphate + UTP + H(+) = UDP-N-acetyl-alpha-D-glucosamine + diphosphate. It functions in the pathway nucleotide-sugar biosynthesis; UDP-N-acetyl-alpha-D-glucosamine biosynthesis; N-acetyl-alpha-D-glucosamine 1-phosphate from alpha-D-glucosamine 6-phosphate (route II): step 2/2. Its pathway is nucleotide-sugar biosynthesis; UDP-N-acetyl-alpha-D-glucosamine biosynthesis; UDP-N-acetyl-alpha-D-glucosamine from N-acetyl-alpha-D-glucosamine 1-phosphate: step 1/1. The protein operates within bacterial outer membrane biogenesis; LPS lipid A biosynthesis. Functionally, catalyzes the last two sequential reactions in the de novo biosynthetic pathway for UDP-N-acetylglucosamine (UDP-GlcNAc). The C-terminal domain catalyzes the transfer of acetyl group from acetyl coenzyme A to glucosamine-1-phosphate (GlcN-1-P) to produce N-acetylglucosamine-1-phosphate (GlcNAc-1-P), which is converted into UDP-GlcNAc by the transfer of uridine 5-monophosphate (from uridine 5-triphosphate), a reaction catalyzed by the N-terminal domain. The sequence is that of Bifunctional protein GlmU from Staphylococcus epidermidis (strain ATCC 35984 / DSM 28319 / BCRC 17069 / CCUG 31568 / BM 3577 / RP62A).